The following is a 248-amino-acid chain: Cytochrome c oxidase subunit 2 (248 aa).

Residues 1-36 are Mitochondrial intermembrane-facing; sequence MLFFNSILNDAPSSWALYFQDGASPSYLGVTHLNDY. Residues 37–57 form a helical membrane-spanning segment; that stretch reads LMFYLTFIFIGVIYAICKAVI. The Mitochondrial matrix segment spans residues 58–75; that stretch reads EYNYNSHPIAAKYTTHGS. The helical transmembrane segment at 76–100 threads the bilayer; the sequence is IVEFIWTLIPALILILVALPSFKLL. Topologically, residues 101–248 are mitochondrial intermembrane; the sequence is YLLDEVQKPS…DFLAWLEENS (148 aa). Positions 182, 217, 219, 221, 225, and 228 each coordinate Cu cation. Glu-219 lines the Mg(2+) pocket.

The protein belongs to the cytochrome c oxidase subunit 2 family. Component of the cytochrome c oxidase (complex IV, CIV), a multisubunit enzyme composed of a catalytic core of 3 subunits and several supernumerary subunits. The complex exists as a monomer or a dimer and forms supercomplexes (SCs) in the inner mitochondrial membrane with ubiquinol-cytochrome c oxidoreductase (cytochrome b-c1 complex, complex III, CIII). The cofactor is Cu cation.

Its subcellular location is the mitochondrion inner membrane. It carries out the reaction 4 Fe(II)-[cytochrome c] + O2 + 8 H(+)(in) = 4 Fe(III)-[cytochrome c] + 2 H2O + 4 H(+)(out). In terms of biological role, component of the cytochrome c oxidase, the last enzyme in the mitochondrial electron transport chain which drives oxidative phosphorylation. The respiratory chain contains 3 multisubunit complexes succinate dehydrogenase (complex II, CII), ubiquinol-cytochrome c oxidoreductase (cytochrome b-c1 complex, complex III, CIII) and cytochrome c oxidase (complex IV, CIV), that cooperate to transfer electrons derived from NADH and succinate to molecular oxygen, creating an electrochemical gradient over the inner membrane that drives transmembrane transport and the ATP synthase. Cytochrome c oxidase is the component of the respiratory chain that catalyzes the reduction of oxygen to water. Electrons originating from reduced cytochrome c in the intermembrane space (IMS) are transferred via the dinuclear copper A center (CU(A)) of subunit 2 and heme A of subunit 1 to the active site in subunit 1, a binuclear center (BNC) formed by heme A3 and copper B (CU(B)). The BNC reduces molecular oxygen to 2 water molecules using 4 electrons from cytochrome c in the IMS and 4 protons from the mitochondrial matrix. The chain is Cytochrome c oxidase subunit 2 (cox2) from Schizosaccharomyces pombe (strain 972 / ATCC 24843) (Fission yeast).